Reading from the N-terminus, the 573-residue chain is MKVLVTAAWPYVNSVPHLGNLIGSILSADVFARYARLRYGKENVLFVSGSDEHGTPIEIEAIKRKVNPKELTDQAHEYDRHLFLNVWKISFDNYTRTESEIHKKFVREFLLKLTKYIKVSEDEIPYCENDKLYLPDRFVKGTCPYCGFEDARGDQCDNCGKLLTPSLLVNPKCSICGKTPVFKKTKHWFFDLSEFNDKIRGWISSSNEMPDNVKSVALSWVGEGLKPRSITRDNKWGIPAPFEGAQDKSIYVWFEALLGYISAVIEYFERKGDQEKWKEYWFGPNIKSYYFIGKDNIPFHAVILPAMLMASEEEYHLPDVIAATEYLLYEGQKFSKSRKIGVWIDEAPELMDVEYWRFVLIRLRPEEKDTNFTWRETVRIVNTELNDDIGNYVNRVLSMVNRYYSGIVPEFKIDILDDNDRKIISLINETPKVVGDLFEKGKLKAGTEEMLKFVRECNAYLNMKAPWDLYKSGKEIELKNTLYIGTNSVKTIAILLYPLMPSHAQKIYEMLNMGNIENEKWDVASTLSVNPGHKIGKVNVLFKKLEPEFESKIKDKLEKIRKDIEKIRPTLLK.

Positions 10-20 (PYVNSVPHLGN) match the 'HIGH' region motif. Zn(2+) is bound by residues cysteine 143, cysteine 146, cysteine 156, and cysteine 159. The 'KMSKS' region signature appears at 333 to 337 (KFSKS). Lysine 336 contacts ATP.

It belongs to the class-I aminoacyl-tRNA synthetase family. MetG type 1 subfamily. The cofactor is Zn(2+).

The protein resides in the cytoplasm. It carries out the reaction tRNA(Met) + L-methionine + ATP = L-methionyl-tRNA(Met) + AMP + diphosphate. Is required not only for elongation of protein synthesis but also for the initiation of all mRNA translation through initiator tRNA(fMet) aminoacylation. This Saccharolobus solfataricus (strain ATCC 35092 / DSM 1617 / JCM 11322 / P2) (Sulfolobus solfataricus) protein is Methionine--tRNA ligase.